The primary structure comprises 145 residues: D-aminoacyl-tRNA deacylase (145 aa).

A Gly-cisPro motif, important for rejection of L-amino acids motif is present at residues 137 to 138 (GP).

This sequence belongs to the DTD family. In terms of assembly, homodimer.

The protein localises to the cytoplasm. The catalysed reaction is glycyl-tRNA(Ala) + H2O = tRNA(Ala) + glycine + H(+). It carries out the reaction a D-aminoacyl-tRNA + H2O = a tRNA + a D-alpha-amino acid + H(+). Its function is as follows. An aminoacyl-tRNA editing enzyme that deacylates mischarged D-aminoacyl-tRNAs. Also deacylates mischarged glycyl-tRNA(Ala), protecting cells against glycine mischarging by AlaRS. Acts via tRNA-based rather than protein-based catalysis; rejects L-amino acids rather than detecting D-amino acids in the active site. By recycling D-aminoacyl-tRNA to D-amino acids and free tRNA molecules, this enzyme counteracts the toxicity associated with the formation of D-aminoacyl-tRNA entities in vivo and helps enforce protein L-homochirality. The polypeptide is D-aminoacyl-tRNA deacylase (Photobacterium profundum (strain SS9)).